Consider the following 338-residue polypeptide: Fusarubin cluster-specific transcription factor fsr6 (338 aa).

The zn(2)-C6 fungal-type DNA-binding region spans 16–44; it reads CDACTTAKVRCSRTHPCERCEDNGQAKEC.

The protein localises to the nucleus. Functionally, transcription factor that regulates the expression of the gene cluster that mediates the biosynthesis of fusarubins, highly pigmented naphthoquinones responsible for the coloration of the fruiting bodies. The protein is Fusarubin cluster-specific transcription factor fsr6 of Gibberella fujikuroi (strain CBS 195.34 / IMI 58289 / NRRL A-6831) (Bakanae and foot rot disease fungus).